Consider the following 232-residue polypeptide: Esterase YpfH (232 aa).

Active-site charge relay system residues include S111, D159, and H191.

It belongs to the AB hydrolase superfamily. AB hydrolase 2 family.

Displays esterase activity toward palmitoyl-CoA and pNP-butyrate. The sequence is that of Esterase YpfH (ypfH) from Escherichia coli (strain K12).